The chain runs to 116 residues: Ribosome-binding factor A (116 aa).

It belongs to the RbfA family. As to quaternary structure, monomer. Binds 30S ribosomal subunits, but not 50S ribosomal subunits or 70S ribosomes.

It is found in the cytoplasm. One of several proteins that assist in the late maturation steps of the functional core of the 30S ribosomal subunit. Associates with free 30S ribosomal subunits (but not with 30S subunits that are part of 70S ribosomes or polysomes). Required for efficient processing of 16S rRNA. May interact with the 5'-terminal helix region of 16S rRNA. The chain is Ribosome-binding factor A from Chlorobium phaeobacteroides (strain BS1).